Reading from the N-terminus, the 595-residue chain is Aspartate--tRNA(Asp/Asn) ligase (595 aa).

An L-aspartate-binding site is contributed by glutamate 175. Positions 199 to 202 are aspartate; it reads QQYK. Positions 221 and 454 each coordinate L-aspartate. 221 to 223 contributes to the ATP binding site; the sequence is RDE. An ATP-binding site is contributed by glutamate 488. Arginine 495 contacts L-aspartate. ATP is bound at residue 540-543; sequence GIDR.

The protein belongs to the class-II aminoacyl-tRNA synthetase family. Type 1 subfamily. In terms of assembly, homodimer.

Its subcellular location is the cytoplasm. The enzyme catalyses tRNA(Asx) + L-aspartate + ATP = L-aspartyl-tRNA(Asx) + AMP + diphosphate. Functionally, aspartyl-tRNA synthetase with relaxed tRNA specificity since it is able to aspartylate not only its cognate tRNA(Asp) but also tRNA(Asn). Reaction proceeds in two steps: L-aspartate is first activated by ATP to form Asp-AMP and then transferred to the acceptor end of tRNA(Asp/Asn). This chain is Aspartate--tRNA(Asp/Asn) ligase, found in Rhizobium meliloti (strain 1021) (Ensifer meliloti).